Consider the following 321-residue polypeptide: Peptide transport system permease protein SapB (321 aa).

A run of 8 helical transmembrane segments spans residues 8 to 28 (HILW…VILL), 41 to 61 (IYIG…GITY), 82 to 102 (CFIT…ISAV), 117 to 137 (YVGL…VAAL), 150 to 170 (LLYE…FMEV), 180 to 200 (ILQH…MEII), 249 to 269 (VFTL…WPGI), and 289 to 309 (VIVI…FTFI). The ABC transmembrane type-1 domain maps to 75–303 (LPPTLELCFI…VCIILIDTFT (229 aa)).

This sequence belongs to the binding-protein-dependent transport system permease family. OppBC subfamily.

The protein resides in the cell inner membrane. Involved in a peptide intake transport system that plays a role in the resistance to antimicrobial peptides. This is Peptide transport system permease protein SapB (sapB) from Haemophilus influenzae (strain ATCC 51907 / DSM 11121 / KW20 / Rd).